Consider the following 498-residue polypeptide: Glycerol kinase (498 aa).

T12 is a binding site for ADP. The ATP site is built by T12, T13, and S14. A sn-glycerol 3-phosphate-binding site is contributed by T12. Position 16 (R16) interacts with ADP. Residues R82, E83, Y134, and D244 each coordinate sn-glycerol 3-phosphate. R82, E83, Y134, D244, and Q245 together coordinate glycerol. Residues T266 and G310 each coordinate ADP. ATP contacts are provided by T266, G310, Q314, and G411. ADP-binding residues include G411 and N415.

This sequence belongs to the FGGY kinase family.

The catalysed reaction is glycerol + ATP = sn-glycerol 3-phosphate + ADP + H(+). It participates in polyol metabolism; glycerol degradation via glycerol kinase pathway; sn-glycerol 3-phosphate from glycerol: step 1/1. With respect to regulation, inhibited by fructose 1,6-bisphosphate (FBP). Its function is as follows. Key enzyme in the regulation of glycerol uptake and metabolism. Catalyzes the phosphorylation of glycerol to yield sn-glycerol 3-phosphate. This chain is Glycerol kinase, found in Chloroflexus aurantiacus (strain ATCC 29364 / DSM 637 / Y-400-fl).